Consider the following 707-residue polypeptide: D-(-)-3-hydroxybutyrate oligomer hydrolase (707 aa).

An N-terminal signal peptide occupies residues 1 to 24; it reads MHHDNFRRLGNAAFAAAAALLAVA. The active-site Charge relay system is serine 311.

It belongs to the D-(-)-3-hydroxybutyrate oligomer hydrolase family.

The protein resides in the secreted. It catalyses the reaction (3R)-hydroxybutanoate dimer + H2O = 2 (R)-3-hydroxybutanoate + H(+). It functions in the pathway lipid metabolism; butanoate metabolism. Functionally, participates in the degradation of poly-3-hydroxybutyrate (PHB). It works downstream of poly(3-hydroxybutyrate) depolymerase, hydrolyzing D(-)-3-hydroxybutyrate oligomers of various length (3HB-oligomers) into 3HB-monomers. This Cupriavidus pinatubonensis (strain JMP 134 / LMG 1197) (Cupriavidus necator (strain JMP 134)) protein is D-(-)-3-hydroxybutyrate oligomer hydrolase.